The sequence spans 483 residues: tRNA sulfurtransferase (483 aa).

The THUMP domain occupies 62-166; that stretch reads PEICDALTRI…QDKLILVKAR (105 aa). Residues 184–185, Lys266, Gly288, and Gln297 contribute to the ATP site; that span reads LI. A disulfide bridge connects residues Cys345 and Cys457. The Rhodanese domain occupies 405–483; that stretch reads LADTDVLLDI…GYTNVKVYRP (79 aa). The active-site Cysteine persulfide intermediate is Cys457.

Belongs to the ThiI family.

The protein localises to the cytoplasm. It carries out the reaction [ThiI sulfur-carrier protein]-S-sulfanyl-L-cysteine + a uridine in tRNA + 2 reduced [2Fe-2S]-[ferredoxin] + ATP + H(+) = [ThiI sulfur-carrier protein]-L-cysteine + a 4-thiouridine in tRNA + 2 oxidized [2Fe-2S]-[ferredoxin] + AMP + diphosphate. The enzyme catalyses [ThiS sulfur-carrier protein]-C-terminal Gly-Gly-AMP + S-sulfanyl-L-cysteinyl-[cysteine desulfurase] + AH2 = [ThiS sulfur-carrier protein]-C-terminal-Gly-aminoethanethioate + L-cysteinyl-[cysteine desulfurase] + A + AMP + 2 H(+). The protein operates within cofactor biosynthesis; thiamine diphosphate biosynthesis. Catalyzes the ATP-dependent transfer of a sulfur to tRNA to produce 4-thiouridine in position 8 of tRNAs, which functions as a near-UV photosensor. Also catalyzes the transfer of sulfur to the sulfur carrier protein ThiS, forming ThiS-thiocarboxylate. This is a step in the synthesis of thiazole, in the thiamine biosynthesis pathway. The sulfur is donated as persulfide by IscS. The polypeptide is tRNA sulfurtransferase (Yersinia pseudotuberculosis serotype O:1b (strain IP 31758)).